The sequence spans 151 residues: Regulatory protein RecX (151 aa).

It belongs to the RecX family.

Its subcellular location is the cytoplasm. In terms of biological role, modulates RecA activity. This is Regulatory protein RecX from Prosthecochloris aestuarii (strain DSM 271 / SK 413).